Here is a 544-residue protein sequence, read N- to C-terminus: E3 ubiquitin-protein ligase makorin-3 (544 aa).

Disordered regions lie at residues 1–46 and 117–144; these read MEES…VSSA and DLSG…KMAT. Composition is skewed to low complexity over residues 9 to 19 and 36 to 46; these read EAHAAAGAEAG and AAGASAGVSSA. 2 C3H1-type zinc fingers span residues 92–119 and 274–301; these read WTKQ…HDLS and PMPL…HGEI. The interval 302–329 is makorin-type Cys-His; sequence CDMCGQQALHPWDAAQQEAHRRACVEAH. An RING-type zinc finger spans residues 347 to 401; that stretch reads CGICMEVVYEKADPSDRRFGILFSCNHTYCLRCIRRWRSATQFENRISKSCPQCR. The C3H1-type 3 zinc-finger motif lies at 430–459; it reads GMSQKACRYFAGGLGHCPFGEFCFYKHEYP.

In terms of tissue distribution, mainly expressed in mouse brain and reproductive system including testis and ovary. Ubiquitously detected at low levels throughout the entire embryo, but expression is highest in the ventricular layers of the brain.

The protein localises to the nucleus. The enzyme catalyses S-ubiquitinyl-[E2 ubiquitin-conjugating enzyme]-L-cysteine + [acceptor protein]-L-lysine = [E2 ubiquitin-conjugating enzyme]-L-cysteine + N(6)-ubiquitinyl-[acceptor protein]-L-lysine.. The protein operates within protein modification; protein ubiquitination. Functionally, E3 ubiquitin ligase catalyzing the covalent attachment of ubiquitin moieties onto substrate proteins. Acts as a key developmental timer that helps ensure puberty begins at the appropriate age, by inhibiting premature activation of the reproductive hormone cascade. Epigenetically regulates GNRH1 transcription by disrupting the binding of methyl-DNA binding protein 3/MBD3 to the promoter of GNRH1. Mechanistically, mediates the non-proteolytic ubiquitination of MBD3 at multiple sites with 'Lys27' ubiquitin linkages and thereby regulates the methylation status of the genome, including GNRH1 promoter. Modulates the stability and translation of GNRH1 mRNA by mediating the non-proteolytic ubiquitination of PABP family members PABPC1, PABPC3 and PABPC4 at multiple sites. Also participates in the maintenance of genomic and epigenomic stability by regulating the abundance of APEX2 via 'Lys-48'-linked ubiquitination. The sequence is that of E3 ubiquitin-protein ligase makorin-3 (Mkrn3) from Mus musculus (Mouse).